The sequence spans 174 residues: Large ribosomal subunit protein bL17 (174 aa).

Belongs to the bacterial ribosomal protein bL17 family. In terms of assembly, part of the 50S ribosomal subunit. Contacts protein L32.

The polypeptide is Large ribosomal subunit protein bL17 (Ruminiclostridium cellulolyticum (strain ATCC 35319 / DSM 5812 / JCM 6584 / H10) (Clostridium cellulolyticum)).